The following is a 130-amino-acid chain: Small ribosomal subunit protein uS9 (130 aa).

This sequence belongs to the universal ribosomal protein uS9 family.

The chain is Small ribosomal subunit protein uS9 from Ralstonia nicotianae (strain ATCC BAA-1114 / GMI1000) (Ralstonia solanacearum).